Reading from the N-terminus, the 235-residue chain is MAKLTKRMRVIREKVDATKQYDINEAISLLKELATAKFVESVDVAVNLGIDARKSDQNVRGATVLPHGTGRSVRVAVFTQGANAEAAKAAGAELVGMEDLAEQIKKGEMNFDVVIASPDAMRVVGQLGQVLGPRGLMPNPKVGTVTPNVAEAVKNAKAGQVRYRNDKNGIIHTTIGKVDFDADKLKENLEALLVALKKAKPTQAKGVYIKKVSISTTMGAGVAVDQSGLTATVAN.

The protein belongs to the universal ribosomal protein uL1 family. Part of the 50S ribosomal subunit.

Binds directly to 23S rRNA. The L1 stalk is quite mobile in the ribosome, and is involved in E site tRNA release. In terms of biological role, protein L1 is also a translational repressor protein, it controls the translation of the L11 operon by binding to its mRNA. The chain is Large ribosomal subunit protein uL1 from Citrobacter koseri (strain ATCC BAA-895 / CDC 4225-83 / SGSC4696).